We begin with the raw amino-acid sequence, 92 residues long: UPF0223 protein SMU_1141c (92 aa).

It belongs to the UPF0223 family.

The polypeptide is UPF0223 protein SMU_1141c (Streptococcus mutans serotype c (strain ATCC 700610 / UA159)).